The sequence spans 76 residues: Large ribosomal subunit protein eL20 (76 aa).

The protein belongs to the eukaryotic ribosomal protein eL20 family. As to quaternary structure, part of the 50S ribosomal subunit. Binds 23S rRNA.

The polypeptide is Large ribosomal subunit protein eL20 (Methanococcus vannielii (strain ATCC 35089 / DSM 1224 / JCM 13029 / OCM 148 / SB)).